The chain runs to 365 residues: Flagellar P-ring protein (365 aa).

The first 19 residues, 1–19 (MIKFLSALILLLVITAAQA), serve as a signal peptide directing secretion.

The protein belongs to the FlgI family. In terms of assembly, the basal body constitutes a major portion of the flagellar organelle and consists of four rings (L,P,S, and M) mounted on a central rod.

The protein resides in the periplasm. The protein localises to the bacterial flagellum basal body. Functionally, assembles around the rod to form the L-ring and probably protects the motor/basal body from shearing forces during rotation. This is Flagellar P-ring protein from Escherichia coli O81 (strain ED1a).